The chain runs to 472 residues: Glycosyl hydrolase family 109 protein (472 aa).

The tat-type signal signal peptide spans 1-35 (MSQTPAVSRRLLLGSAAATGALATGIGSAAPVAAA). NAD(+) contacts are provided by residues 68–69 (NR), D90, 139–142 (WEFH), H145, 159–160 (EL), and N188. Substrate-binding positions include Y217, R236, 248 to 251 (YPMH), and Y330. Y248 contributes to the NAD(+) binding site.

This sequence belongs to the Gfo/Idh/MocA family. Glycosyl hydrolase 109 subfamily. It depends on NAD(+) as a cofactor. Predicted to be exported by the Tat system. The position of the signal peptide cleavage has not been experimentally proven.

Functionally, glycosidase. Has no alpha-N-acetylgalactosaminidase activity. In Streptomyces coelicolor (strain ATCC BAA-471 / A3(2) / M145), this protein is Glycosyl hydrolase family 109 protein.